Here is a 492-residue protein sequence, read N- to C-terminus: Protein PAIR1 (492 aa).

Residues 166–186 are a coiled coil; it reads VDSVQSDVMQLNRAMKEASLD. The Nuclear localization signal motif lies at 479 to 483; that stretch reads KRRRR.

As to quaternary structure, interacts with CRC1. In terms of tissue distribution, expressed in reproductive organs, but not in vegetative organs.

Its subcellular location is the nucleus. Functionally, involved in spore formation. Plays an essential role in the establishment of homologous chromosome pairing in early meiosis. This Oryza sativa subsp. japonica (Rice) protein is Protein PAIR1 (PAIR1).